The sequence spans 105 residues: Small ribosomal subunit protein uS10 (105 aa).

Belongs to the universal ribosomal protein uS10 family. As to quaternary structure, part of the 30S ribosomal subunit.

Involved in the binding of tRNA to the ribosomes. The polypeptide is Small ribosomal subunit protein uS10 (Acidobacterium capsulatum (strain ATCC 51196 / DSM 11244 / BCRC 80197 / JCM 7670 / NBRC 15755 / NCIMB 13165 / 161)).